The primary structure comprises 231 residues: NADH-ubiquinone oxidoreductase chain 4 (231 aa).

6 consecutive transmembrane segments (helical) span residues 1–21 (PIAG…YGII), 34–54 (MFLP…LTCL), 63–85 (IAYS…TPWG), 89–111 (AMAL…NTTY), 128–148 (ILPM…ATPP), and 156–176 (LLIM…LGLS).

It belongs to the complex I subunit 4 family.

Its subcellular location is the mitochondrion membrane. It carries out the reaction a ubiquinone + NADH + 5 H(+)(in) = a ubiquinol + NAD(+) + 4 H(+)(out). Core subunit of the mitochondrial membrane respiratory chain NADH dehydrogenase (Complex I) that is believed to belong to the minimal assembly required for catalysis. Complex I functions in the transfer of electrons from NADH to the respiratory chain. The immediate electron acceptor for the enzyme is believed to be ubiquinone. The protein is NADH-ubiquinone oxidoreductase chain 4 (MT-ND4) of Trimeresurus stejnegeri (Chinese green tree viper).